Here is an 87-residue protein sequence, read N- to C-terminus: MKSKISEYTEKEFLEFVEDIYTNNKKKFPTEESHIQAVLEFKKLTEHPSGSDLLYYPNENREDSPAGVVKEVKEWRASKGLPGFKAG.

Belongs to the colicins ColE2/ColE8/ColE9 and pyocins S1/S2 family.

The sequence is that of Pyocin-S1 immunity protein (imm1) from Pseudomonas aeruginosa.